Here is a 380-residue protein sequence, read N- to C-terminus: Alcohol dehydrogenase 1 (380 aa).

Cys-48, Thr-50, His-70, Cys-100, Cys-103, Cys-106, Cys-114, and Cys-178 together coordinate Zn(2+). Residues Thr-50 and His-70 each coordinate an alcohol. Thr-50 provides a ligand contact to NAD(+). Residues 203-208 (GLGAVG), Asp-227, Arg-232, Thr-273, Val-296, 296-298 (VGV), and Arg-373 contribute to the NAD(+) site.

It belongs to the zinc-containing alcohol dehydrogenase family. In terms of assembly, homodimer. The cofactor is Zn(2+).

It is found in the cytoplasm. It carries out the reaction a primary alcohol + NAD(+) = an aldehyde + NADH + H(+). It catalyses the reaction a secondary alcohol + NAD(+) = a ketone + NADH + H(+). The chain is Alcohol dehydrogenase 1 from Pisum sativum (Garden pea).